The following is a 504-amino-acid chain: Maturase K (504 aa).

This sequence belongs to the intron maturase 2 family. MatK subfamily.

Its subcellular location is the plastid. The protein resides in the chloroplast. In terms of biological role, usually encoded in the trnK tRNA gene intron. Probably assists in splicing its own and other chloroplast group II introns. In Berzelia lanuginosa (Buttonbush), this protein is Maturase K.